Here is a 623-residue protein sequence, read N- to C-terminus: Chaperone protein DnaK (623 aa).

Position 197 is a phosphothreonine; by autocatalysis (T197). The segment at 600–623 (KKDENAGANGGNKKDDDVIDAEVE) is disordered.

This sequence belongs to the heat shock protein 70 family.

In terms of biological role, acts as a chaperone. This is Chaperone protein DnaK from Campylobacter concisus (strain 13826).